A 108-amino-acid chain; its full sequence is Cytochrome c (108 aa).

Residues cysteine 19, cysteine 22, histidine 23, and methionine 85 each coordinate heme c.

This sequence belongs to the cytochrome c family. Binds 1 heme c group covalently per subunit.

It is found in the mitochondrion intermembrane space. Electron carrier protein. The oxidized form of the cytochrome c heme group can accept an electron from the heme group of the cytochrome c1 subunit of cytochrome reductase. Cytochrome c then transfers this electron to the cytochrome oxidase complex, the final protein carrier in the mitochondrial electron-transport chain. This Stellaria longipes (Longstalk starwort) protein is Cytochrome c.